The primary structure comprises 135 residues: Salivary protein 15 Iper-1 (135 aa).

An N-terminal signal peptide occupies residues 1–22 (MESFVAMKVVCILFLFVVAAEA). Residues Asn93 and Asn104 are each glycosylated (N-linked (GlcNAc...) asparagine). The tract at residues 116 to 135 (GPNKQTCADKSKCVGHIPGC) is CD4-binding.

The protein belongs to the salp15 family. In terms of assembly, interacts with host CD4. Interacts with host DC-SIGN (CD209). (Microbial infection) Interacts with Borrelia outer surface protein C (OspC). As to expression, expressed in salivary glands from feeding female ticks. Highly expressed 4 days after start of feeding.

Its subcellular location is the secreted. In terms of biological role, salivary tick protein that downregulates host immune system by binding to both dendritic cells, and CD4(+) T cells. Specifically binds to the CD4 coreceptor on T cells. This interaction prevents the activation of the Src kinase, Lck, and its downstream substrate Zap-70, and results in deficient activation of PLCgamma1, the repression of calcium fluxes triggered by T-cell antigen receptor (TCR) ligation, and a subsequent reduction in interleukin-2 production. This salivary protein also binds to DC-SIGN (CD209) on dendritic cells (DC) and activates the Raf-1 kinase/MEK signaling pathway that results in down-regulating expression of pro-inflammatory cytokines. Furthermore, it inhibits T cell proliferation induced by DCs. It also inhibits in vitro keratinocyte inflammation induced by Borrelia burgdorferi or by the major outer surface protein (OspC) of Borrelia. In addition, it downregulates chemokines and monocyte chemoattractant protein 1, as well as several antimicrobial peptides such as defensins, cathelicidin, psoriasin, and RNase 7. Apart from its immunomodulatory activities, it is also associated with protection of Borrelia spirochetes from antibody-mediated killing through its binding to OspC. In vivo, tests on different immune disease animal models show promising therapeutic results, e.g., in inhibiting HIV infection, experimental autoimmune encephalomyelitis, transplantation rejection, and asthma. Its function is as follows. (Microbial infection) Protects Borrelia garinii from anti-Borrelia antibody-mediated cytotoxicity in vitro. May facilitate B.garinii transmission in mouse model. Functionally, (Microbial infection) Protects Borrelia burgdorferi from anti-Borrelia antibody-mediated cytotoxicity in vitro. (Microbial infection) Protects Borrelia afzelii from anti-Borrelia antibody-mediated cytotoxicity in vitro. The sequence is that of Salivary protein 15 Iper-1 from Ixodes persulcatus (Taiga tick).